Reading from the N-terminus, the 75-residue chain is Large ribosomal subunit protein uL29 (75 aa).

This sequence belongs to the universal ribosomal protein uL29 family.

In Pyrobaculum aerophilum (strain ATCC 51768 / DSM 7523 / JCM 9630 / CIP 104966 / NBRC 100827 / IM2), this protein is Large ribosomal subunit protein uL29.